Reading from the N-terminus, the 330-residue chain is Putative 4-hydroxythreonine-4-phosphate dehydrogenase (330 aa).

A divalent metal cation is bound by residues His169, His213, and His263.

This sequence belongs to the PdxA family. As to quaternary structure, homodimer. It depends on Zn(2+) as a cofactor. Mg(2+) serves as cofactor. Co(2+) is required as a cofactor.

The protein localises to the cytoplasm. The enzyme catalyses 4-(phosphooxy)-L-threonine + NAD(+) = 3-amino-2-oxopropyl phosphate + CO2 + NADH. It participates in cofactor biosynthesis; pyridoxine 5'-phosphate biosynthesis; pyridoxine 5'-phosphate from D-erythrose 4-phosphate: step 4/5. Catalyzes the NAD(P)-dependent oxidation of 4-(phosphooxy)-L-threonine (HTP) into 2-amino-3-oxo-4-(phosphooxy)butyric acid which spontaneously decarboxylates to form 3-amino-2-oxopropyl phosphate (AHAP). This chain is Putative 4-hydroxythreonine-4-phosphate dehydrogenase, found in Novosphingobium aromaticivorans (Sphingomonas aromaticivorans).